A 5571-amino-acid chain; its full sequence is Polyketide synthase GfsB (5571 aa).

A disordered region spans residues 1-27 (MSVPPPGATPSRTSRTKGLKDRPRMEN). The segment covering 18–27 (GLKDRPRMEN) has biased composition (basic and acidic residues). The Ketosynthase family 3 (KS3) 1 domain maps to 57-483 (QEPVAIIGMS…GTNAHVIIEQ (427 aa)). Module regions lie at residues 57-2148 (QEPV…RDTL), 2167-3728 (DEPL…GSQV), and 3746-5485 (DEPV…HTHL). Catalysis depends on for beta-ketoacyl synthase 1 activity residues cysteine 230, histidine 365, and histidine 405. The tract at residues 485–518 (PAIEGTGLGDDAPPTAEHPEERTPADGGPAPQPV) is disordered. The region spanning 611–926 (FVFPGQGSQW…LRSLAEAYAH (316 aa)) is the Malonyl-CoA:ACP transacylase (MAT) 1 domain. Positions 976 to 1109 (HPLLAAATSL…GYLAVGAHEP (134 aa)) are N-terminal hotdog fold 1. One can recognise a PKS/mFAS DH 1 domain in the interval 976–1264 (HPLLAAATSL…LRPLATNQAP (289 aa)). The active-site Proton acceptor; for dehydratase activity 1 is the histidine 1008. Positions 1122 to 1264 (ATPLDVTDLY…LRPLATNQAP (143 aa)) are C-terminal hotdog fold 1. Aspartate 1183 functions as the Proton donor; for dehydratase activity 1 in the catalytic mechanism. In terms of domain architecture, Enoyl reductase (ER) spans 1478-1777 (GTLDHLTLIP…QARHIGKIVL (300 aa)). The region spanning 1787–1966 (GTVLVTGATG…TSLAWGLWEE (180 aa)) is the Ketoreductase (KR) 1 domain. The Carrier 1 domain occupies 2073-2148 (RIVNDLVRDH…ELAAHLRDTL (76 aa)). An O-(pantetheine 4'-phosphoryl)serine modification is found at serine 2108. A Ketosynthase family 3 (KS3) 2 domain is found at 2167–2593 (DEPLAVVAMS…GTNAHVILEQ (427 aa)). Active-site for beta-ketoacyl synthase 2 activity residues include cysteine 2340, histidine 2475, and histidine 2515. Residues 2710–3016 (VFSGQGSQRP…AAVALQRGNR (307 aa)) enclose the Malonyl-CoA:ACP transacylase (MAT) 2 domain. In terms of domain architecture, Ketoreductase (KR) 2 spans 3373–3551 (GTVLVTGGTG…VSVAWGPWAE (179 aa)). In terms of domain architecture, Carrier 2 spans 3653-3728 (TALLDLVRGQ…ALAEYVGSQV (76 aa)). Position 3688 is an O-(pantetheine 4'-phosphoryl)serine (serine 3688). In terms of domain architecture, Ketosynthase family 3 (KS3) 3 spans 3746 to 4172 (DEPVAIIGMS…GTNAHVILEQ (427 aa)). Catalysis depends on for beta-ketoacyl synthase 3 activity residues cysteine 3919, histidine 4054, and histidine 4094. One can recognise a Malonyl-CoA:ACP transacylase (MAT) 3 domain in the interval 4279 to 4601 (FLFSGQGSQR…ATAHVNGVQP (323 aa)). The N-terminal hotdog fold 2 stretch occupies residues 4649–4774 (HPLLAGVVDL…GALTVAEAVD (126 aa)). The PKS/mFAS DH 2 domain occupies 4649–4931 (HPLLAGVVDL…TRPIAAGQLA (283 aa)). Histidine 4681 serves as the catalytic Proton acceptor; for dehydratase activity 2. Residues 4787–4931 (AIEVELDDPY…TRPIAAGQLA (145 aa)) form a C-terminal hotdog fold 2 region. Aspartate 4848 acts as the Proton donor; for dehydratase activity 2 in catalysis. One can recognise a Ketoreductase (KR) 3 domain in the interval 5134 to 5306 (LLVTGASGVL…TSLSWGLWAE (173 aa)). Positions 5410-5485 (RMVLDLVRDR…ALARYLHTHL (76 aa)) constitute a Carrier 3 domain. Serine 5445 is subject to O-(pantetheine 4'-phosphoryl)serine.

The cofactor is pantetheine 4'-phosphate.

It participates in antibiotic biosynthesis. Second protein in the synthesis of the 16-membered macrolide antibiotics FD-891 and FD-892. Composed of 3 modules. Modifies the product of GfsA by multiple rounds of addition of malonyl-CoA or methylmalonyl-CoA and other modifications to help generate the final products. In Streptomyces halstedii, this protein is Polyketide synthase GfsB.